A 90-amino-acid chain; its full sequence is uncharacterized protein (90 aa).

The protein belongs to the barstar family.

This is an uncharacterized protein from Escherichia coli O157:H7.